The chain runs to 96 residues: RING finger protein Z (96 aa).

Residues 1-10 are compositionally biased toward basic and acidic residues; it reads MGNCRSKQES. The disordered stretch occupies residues 1–21; sequence MGNCRSKQESHPICPNTQTPE. Glycine 2 is lipidated: N-myristoyl glycine; by host. The segment at 41 to 77 adopts an RING-type; atypical zinc-finger fold; sequence CKCCWFADRNLINCSDHYLCLRCLNVMLRTSNLCNIC. The PTAP/PSAP motif motif lies at 91–94; sequence PTAP.

It belongs to the arenaviridae Z protein family. Interacts with protein NP; this interaction probably directs the encapsidated genome to budding sites. Interacts (via RING domain) with polymerase L; this interaction inhibits viral transcription and replication, Z partially blocks the product exit tunnel for the releasing nascent RNA product. Interacts with the glycoprotein complex; this interaction plays a role in virion budding. Interacts with host eIF4E; this interaction results in eIF4E reduced affinity for its substrate, the 5'-m7 G cap structure. Interacts (via late-budding domain) with host TSG101; this interaction is essential for budding and release of viral particles. Interacts with host RPLP0; this interaction may serve to load ribosome-like particles inside the virion. Interacts with host PML; this interaction induces PML bodies redistribution in the cytoplasm upon viral infection. Post-translationally, myristoylation is required for the role of RING finger protein Z in assembly and budding.

The protein localises to the virion. It localises to the host cytoplasm. Its subcellular location is the host perinuclear region. It is found in the host cell membrane. Functionally, plays a crucial role in virion assembly and budding. Expressed late in the virus life cycle, it acts as an inhibitor of viral transcription and RNA synthesis by interacting with the viral polymerase L. Presumably recruits the NP encapsidated genome to cellular membranes at budding sites via direct interaction with NP. Plays critical roles in the final steps of viral release by interacting with host TSG101, a member of the vacuolar protein-sorting pathway and using other cellular host proteins involved in vesicle formation pathway. The budding of the virus progeny occurs after association of protein Z with the viral glycoprotein complex SSP-GP1-GP2 at the cell periphery, step that requires myristoylation of protein Z. Also selectively represses protein production by associating with host eIF4E. In cell-based minigenome assay, has an inhibitory effect on the ribonucleoprotein machinery (vRNP), which is responsible for the replication and transcription of the viral genome. In Hylaeamys megacephalus (Large-headed rice rat), this protein is RING finger protein Z.